Reading from the N-terminus, the 79-residue chain is Small ribosomal subunit protein uS17 (79 aa).

This sequence belongs to the universal ribosomal protein uS17 family. Part of the 30S ribosomal subunit.

One of the primary rRNA binding proteins, it binds specifically to the 5'-end of 16S ribosomal RNA. In Bartonella quintana (strain Toulouse) (Rochalimaea quintana), this protein is Small ribosomal subunit protein uS17.